Reading from the N-terminus, the 706-residue chain is Elongation factor G (706 aa).

In terms of domain architecture, tr-type G spans 8–290; that stretch reads NRYRNIGICA…AVIDYLPAPT (283 aa). Residues 17-24, 88-92, and 142-145 each bind GTP; these read AHVDAGKT, DTPGH, and NKMD.

The protein belongs to the TRAFAC class translation factor GTPase superfamily. Classic translation factor GTPase family. EF-G/EF-2 subfamily.

It localises to the cytoplasm. In terms of biological role, catalyzes the GTP-dependent ribosomal translocation step during translation elongation. During this step, the ribosome changes from the pre-translocational (PRE) to the post-translocational (POST) state as the newly formed A-site-bound peptidyl-tRNA and P-site-bound deacylated tRNA move to the P and E sites, respectively. Catalyzes the coordinated movement of the two tRNA molecules, the mRNA and conformational changes in the ribosome. The sequence is that of Elongation factor G from Stutzerimonas stutzeri (strain A1501) (Pseudomonas stutzeri).